Reading from the N-terminus, the 382-residue chain is uncharacterized protein (382 aa).

A run of 12 helical transmembrane segments spans residues 14–34, 45–65, 79–99, 102–122, 131–151, 157–177, 204–224, 235–255, 270–290, 291–311, 325–345, and 348–368; these read GLLL…LWLA, VVSS…GYVI, FIFA…SWLA, FVAG…LMCS, LLAA…LLVS, LMSV…PLLF, LGVN…GLMP, ASIG…QWPI, VQVF…AMAP, ALFI…AWAC, ALLL…AMLM, and FSDN…LLML.

It belongs to the major facilitator superfamily. YcaD (TC 2.A.1.26) family.

It is found in the cell inner membrane. This is an uncharacterized protein from Escherichia coli O45:K1 (strain S88 / ExPEC).